A 243-amino-acid polypeptide reads, in one-letter code: Ribonuclease PH (243 aa).

Residues Arg-91 and 129-131 (GTR) each bind phosphate.

It belongs to the RNase PH family. Homohexameric ring arranged as a trimer of dimers.

The enzyme catalyses tRNA(n+1) + phosphate = tRNA(n) + a ribonucleoside 5'-diphosphate. Its function is as follows. Phosphorolytic 3'-5' exoribonuclease that plays an important role in tRNA 3'-end maturation. Removes nucleotide residues following the 3'-CCA terminus of tRNAs; can also add nucleotides to the ends of RNA molecules by using nucleoside diphosphates as substrates, but this may not be physiologically important. Probably plays a role in initiation of 16S rRNA degradation (leading to ribosome degradation) during starvation. The chain is Ribonuclease PH from Burkholderia mallei (strain NCTC 10247).